Here is a 436-residue protein sequence, read N- to C-terminus: uncharacterized protein (436 aa).

The helical transmembrane segment at 1 to 21 threads the bilayer; it reads MILLQVICTIWTCLFIPLLNA. BNR repeat units lie at residues 57–68 and 101–112; these read WISSDSGENWEA and YVTDDRGKSWRA. Asparagine 157 carries N-linked (GlcNAc...) asparagine glycosylation. 2 BNR repeats span residues 229-240 and 394-405; these read ALSTDGGKTFKK and KISVDNGLTWSN.

It localises to the membrane. This is an uncharacterized protein from Saccharomyces cerevisiae (strain ATCC 204508 / S288c) (Baker's yeast).